Consider the following 154-residue polypeptide: MAENSGRAGKSSGSGAGKGAVSAEQVIAGFNRLRQEQRGLASKAAELEMELNEHSLVIDTLKEVDETRKCYRMVGGVLVERTVKEVLPALENNKEQIQKIIETLTQQLQAKGKELNEFREKHNIRLMGEDEKPAAKENSEGAGAKASSAGVLVS.

The segment covering 124 to 139 (IRLMGEDEKPAAKENS) has biased composition (basic and acidic residues). The segment at 124–154 (IRLMGEDEKPAAKENSEGAGAKASSAGVLVS) is disordered. Positions 140 to 154 (EGAGAKASSAGVLVS) are enriched in low complexity.

It belongs to the prefoldin subunit beta family. In terms of assembly, heterohexamer of two PFD-alpha type and four PFD-beta type subunits. Component of the PAQosome complex which is responsible for the biogenesis of several protein complexes and which consists of R2TP complex members RUVBL1, RUVBL2, RPAP3 and PIH1D1, URI complex members PFDN2, PFDN6, PDRG1, UXT and URI1 as well as ASDURF, POLR2E and DNAAF10/WDR92. Interacts with URI1; the interaction is phosphorylation-dependent and occurs in a growth-dependent manner.

The protein resides in the nucleus. It is found in the cytoplasm. It localises to the mitochondrion. In terms of biological role, binds specifically to cytosolic chaperonin (c-CPN) and transfers target proteins to it. Binds to nascent polypeptide chain and promotes folding in an environment in which there are many competing pathways for nonnative proteins. The chain is Prefoldin subunit 2 (PFDN2) from Homo sapiens (Human).